A 472-amino-acid polypeptide reads, in one-letter code: Protein nucleotidyltransferase YdiU (472 aa).

ATP contacts are provided by glycine 86, glycine 88, arginine 89, lysine 109, aspartate 121, glycine 122, arginine 172, and arginine 179. Aspartate 244 serves as the catalytic Proton acceptor. Residues asparagine 245 and aspartate 254 each coordinate Mg(2+). Aspartate 254 is a binding site for ATP.

Belongs to the SELO family. Mg(2+) serves as cofactor. The cofactor is Mn(2+).

It catalyses the reaction L-seryl-[protein] + ATP = 3-O-(5'-adenylyl)-L-seryl-[protein] + diphosphate. The enzyme catalyses L-threonyl-[protein] + ATP = 3-O-(5'-adenylyl)-L-threonyl-[protein] + diphosphate. The catalysed reaction is L-tyrosyl-[protein] + ATP = O-(5'-adenylyl)-L-tyrosyl-[protein] + diphosphate. It carries out the reaction L-histidyl-[protein] + UTP = N(tele)-(5'-uridylyl)-L-histidyl-[protein] + diphosphate. It catalyses the reaction L-seryl-[protein] + UTP = O-(5'-uridylyl)-L-seryl-[protein] + diphosphate. The enzyme catalyses L-tyrosyl-[protein] + UTP = O-(5'-uridylyl)-L-tyrosyl-[protein] + diphosphate. Its function is as follows. Nucleotidyltransferase involved in the post-translational modification of proteins. It can catalyze the addition of adenosine monophosphate (AMP) or uridine monophosphate (UMP) to a protein, resulting in modifications known as AMPylation and UMPylation. In Ruegeria pomeroyi (strain ATCC 700808 / DSM 15171 / DSS-3) (Silicibacter pomeroyi), this protein is Protein nucleotidyltransferase YdiU.